The chain runs to 293 residues: Bifunctional monothiol glutaredoxin-S16, chloroplastic (293 aa).

The transit peptide at 1–62 directs the protein to the chloroplast; the sequence is MAAITISSSL…APSRRRSFFI (62 aa). A disulfide bridge links C123 with C219. The 100-residue stretch at 194–293 folds into the Glutaredoxin domain; that stretch reads EELIDRLVKE…ENGELANILN (100 aa). K211 provides a ligand contact to glutathione. C219 contacts [2Fe-2S] cluster. Residues R251, F263, and 276–277 each bind glutathione; that span reads CD.

It belongs to the glutaredoxin family. CGFS subfamily. [2Fe-2S]-bridged holo-homodimer. Interacts in vitro with SUFE1, BOLA1, BOLA2 and BOLA4. Interacts in vivo only with SUFE1, BOLA1 and BOLA4. Interacts with SBP1.

Its subcellular location is the plastid. It localises to the chloroplast. The formation of an intramolecular disulfide bond negatively regulates both the N-terminal endonuclease and the C-terminal glutaredoxin activities. May only reduce GSH-thiol disulfides, but not protein disulfides. Participates probably to the maturation of iron-sulfur proteins and to the regulation of the redox state of the BOLA proteins. The GRXS16-BOLA1 heterodimer binds a labile, oxygen sensitive iron-sulfur cluster. Able to cleave linearized DNA in vitro. This chain is Bifunctional monothiol glutaredoxin-S16, chloroplastic, found in Arabidopsis thaliana (Mouse-ear cress).